A 1158-amino-acid polypeptide reads, in one-letter code: ATP-dependent helicase/deoxyribonuclease subunit B (1158 aa).

Residues 1–275 form the UvrD-like helicase ATP-binding domain; that stretch reads MTLHAYLGRA…QYFNQLYRFN (275 aa). 8 to 15 contacts ATP; it reads GRAGTGKS. The UvrD-like helicase C-terminal domain maps to 269–583; the sequence is NQLYRFNNQD…SIGTMDLAKV (315 aa). The [4Fe-4S] cluster site is built by Cys-784, Cys-1112, Cys-1115, and Cys-1121.

This sequence belongs to the helicase family. AddB/RexB type 1 subfamily. As to quaternary structure, heterodimer of AddA and AddB. Mg(2+) is required as a cofactor. It depends on [4Fe-4S] cluster as a cofactor.

Functionally, the heterodimer acts as both an ATP-dependent DNA helicase and an ATP-dependent, dual-direction single-stranded exonuclease. Recognizes the chi site generating a DNA molecule suitable for the initiation of homologous recombination. The AddB subunit has 5' -&gt; 3' nuclease activity but not helicase activity. The sequence is that of ATP-dependent helicase/deoxyribonuclease subunit B from Staphylococcus aureus (strain MRSA252).